A 443-amino-acid polypeptide reads, in one-letter code: Methylenetetrahydrofolate--tRNA-(uracil-5-)-methyltransferase TrmFO (443 aa).

8-13 provides a ligand contact to FAD; the sequence is GAGLAG.

The protein belongs to the MnmG family. TrmFO subfamily. FAD is required as a cofactor.

It localises to the cytoplasm. It catalyses the reaction uridine(54) in tRNA + (6R)-5,10-methylene-5,6,7,8-tetrahydrofolate + NADH + H(+) = 5-methyluridine(54) in tRNA + (6S)-5,6,7,8-tetrahydrofolate + NAD(+). It carries out the reaction uridine(54) in tRNA + (6R)-5,10-methylene-5,6,7,8-tetrahydrofolate + NADPH + H(+) = 5-methyluridine(54) in tRNA + (6S)-5,6,7,8-tetrahydrofolate + NADP(+). Catalyzes the folate-dependent formation of 5-methyl-uridine at position 54 (M-5-U54) in all tRNAs. The protein is Methylenetetrahydrofolate--tRNA-(uracil-5-)-methyltransferase TrmFO of Thermus thermophilus (strain ATCC BAA-163 / DSM 7039 / HB27).